Consider the following 859-residue polypeptide: MQEQYNPSEIEALVQKHWHDNKTFEVTEDANKEKFYCLSMFPYPSGRLHMGHVRNYTIGDVVARFQRLQGKNVLQPIGWDSFGLPAENAAINNKTAPAPWTYENIEYMKNQLKLLGFGYDWSREIATCTPEYYRWEQWFFTKLYEKGLVYKKTASVNWCPNDETVLANEQVQDGCCWRCDTPVEQKEIPQWFIKITAYAEELLNDIDTLDGWPDQVKTMQRNWIGRSEGVEMTFGVAGHDKSFDIYTTRPDTLMGVTYVAIAAGHPLAEIAAQTNPELAAFIDECKNSTTSEAELATMEKRGVATGLFAIHPITGKQVPIWAANFVLMNYGTGAVMSVPGHDQRDFEFAKKYGLAIEAVIKPVDGDVDISEAAYTEKGVLFNSGEFDGLDFEAGFNAIANKLVAEGKGKRQVNYRLRDWGVSRQRYWGAPIPMVTLADGTVIPTPADQLPVLLPEDVVMDGIQSPIKADKEWAKTQVNGQDALRETDTFDTFMESSWYYARYCSPHADEMLDPAKANYWLPVDQYIGGIEHACMHLLYFRFFHKLLRDAGLVNSNEPAKQLLTQGMVLADAFYYINEKGARVWVSPLDVATTEKDDKGRITKAIDKDGNELVYTGMSKMSKSKNNGIDPQVMVEKYGADTVRLFMMFASPPELTLEWQESGVEGAHRFIKRLWKLANEHVNQDNSEALDASKLTSDQKALRREVHKTIAKVTDDIGRRQMFNTAVAAVMELMNHLQKAPQTTGQDNAIIGEALSAIVRLLYPIIPHVSFNLWNELGNASNIEDSQWPVVDEAALVEDSKLIVVQVNGKVRAKITVAADADKESVEALGMSDEHVIKYLDGLTVRKVIYVPGKLLSIVAN.

The short motif at 42-52 is the 'HIGH' region element; the sequence is PYPSGRLHMGH. A 'KMSKS' region motif is present at residues 618–622; it reads KMSKS. Position 621 (lysine 621) interacts with ATP.

Belongs to the class-I aminoacyl-tRNA synthetase family.

It localises to the cytoplasm. It catalyses the reaction tRNA(Leu) + L-leucine + ATP = L-leucyl-tRNA(Leu) + AMP + diphosphate. The sequence is that of Leucine--tRNA ligase from Shewanella baltica (strain OS195).